The primary structure comprises 159 residues: Ribosomal RNA large subunit methyltransferase H (159 aa).

Residues Leu-76, Gly-108, and 127 to 132 (FSKMTF) each bind S-adenosyl-L-methionine.

Belongs to the RNA methyltransferase RlmH family. In terms of assembly, homodimer.

It localises to the cytoplasm. It carries out the reaction pseudouridine(1915) in 23S rRNA + S-adenosyl-L-methionine = N(3)-methylpseudouridine(1915) in 23S rRNA + S-adenosyl-L-homocysteine + H(+). In terms of biological role, specifically methylates the pseudouridine at position 1915 (m3Psi1915) in 23S rRNA. In Geobacillus kaustophilus (strain HTA426), this protein is Ribosomal RNA large subunit methyltransferase H.